Reading from the N-terminus, the 489-residue chain is Ataxin-10 homolog (489 aa).

The protein belongs to the ataxin-10 family.

The protein localises to the cytoplasm. May play a role in the regulation of cytokinesis. This is Ataxin-10 homolog (CTR86) from Debaryomyces hansenii (strain ATCC 36239 / CBS 767 / BCRC 21394 / JCM 1990 / NBRC 0083 / IGC 2968) (Yeast).